Reading from the N-terminus, the 238-residue chain is Monocyte to macrophage differentiation factor (238 aa).

The Cytoplasmic portion of the chain corresponds to 1–28 (MRFRNRFQRFMNHRAPANGRYKPTCYEH). Residues 29–49 (AANCYTHAFLIVPAIVGSALL) traverse the membrane as a helical segment. At 50–61 (HRLSDDCWEKIT) the chain is on the lumenal side. A helical transmembrane segment spans residues 62–82 (AWIYGMGLCALFIVSTVFHIV). Over 83-101 (SWKKSHLRTVEHCFHMCDR) the chain is Cytoplasmic. Residues 102–122 (MVIYFFIAASYAPWLNLRELG) form a helical membrane-spanning segment. Pro123 is a topological domain (lumenal). The helical transmembrane segment at 124–144 (LASHMRWFIWLMAAGGTIYVF) threads the bilayer. The Cytoplasmic segment spans residues 145-151 (LYHEKYK). The chain crosses the membrane as a helical span at residues 152 to 172 (VVELFFYLTMGFSPALVVTSM). Over 173 to 174 (NN) the chain is Lumenal. A helical transmembrane segment spans residues 175-195 (TDGLQELACGGLIYCLGVVFF). Residues 196 to 198 (KSD) are Cytoplasmic-facing. Residues 199–219 (GIIPFAHAIWHLFVATAAAVH) traverse the membrane as a helical segment. Residues 220-238 (YYAIWKYLYRSPTDFIRHL) are Lumenal-facing.

Belongs to the ADIPOR family.

It localises to the late endosome membrane. Its subcellular location is the lysosome membrane. Involved in the dynamics of lysosomal membranes associated with microglial activation following brain lesion. This is Monocyte to macrophage differentiation factor from Mus musculus (Mouse).